We begin with the raw amino-acid sequence, 598 residues long: NADPH-dependent diflavin oxidoreductase 1 (598 aa).

The Flavodoxin-like domain maps to 6-150 (LLVLFGSQTG…AIDPWVGDLW (145 aa)). FMN contacts are provided by residues 12-17 (SQTGTA), 59-62 (ATTG), 97-106 (LGDSSYAKFN), and Asp132. An FAD-binding FR-type domain is found at 206–448 (LQPFLAPVIT…VRPGSLVFPK (243 aa)). FAD-binding positions include Arg350, 382–385 (RAFS), and 416–419 (GLCS). NADP(+) contacts are provided by residues Thr461, 516–517 (SR), 522–526 (KVYVQ), and Asp559. Residue Trp597 coordinates FAD.

The protein belongs to the NADPH-dependent diflavin oxidoreductase NDOR1 family. This sequence in the N-terminal section; belongs to the flavodoxin family. In the C-terminal section; belongs to the flavoprotein pyridine nucleotide cytochrome reductase family. Interacts with CIAPIN1; as part of the cytosolic iron-sulfur (Fe-S) protein assembly (CIA) machinery. Interacts with DCPS. Requires FAD as cofactor. It depends on FMN as a cofactor.

It localises to the cytoplasm. The protein localises to the perinuclear region. The enzyme catalyses 2 oxidized [2Fe-2S]-[protein] + NADPH = 2 reduced [2Fe-2S]-[protein] + NADP(+) + H(+). In terms of biological role, NADPH-dependent reductase which is a central component of the cytosolic iron-sulfur (Fe-S) protein assembly (CIA) machinery. Transfers electrons from NADPH via its FAD and FMN prosthetic groups to the [2Fe-2S] cluster of CIAPIN1, another key component of the CIA machinery. In turn, this reduced cluster provides electrons for assembly of cytosolic iron-sulfur cluster proteins. It can also reduce the [2Fe-2S] cluster of CISD1 and activate this protein implicated in Fe/S cluster repair. In vitro can fully activate methionine synthase/MTR in the presence of soluble cytochrome b5/CYB5A. This Mus musculus (Mouse) protein is NADPH-dependent diflavin oxidoreductase 1.